The primary structure comprises 243 residues: Flavin-dependent thymidylate synthase (243 aa).

A ThyX domain is found at 2 to 207; sequence VKVKLINYTP…ELKPIIEWAK (206 aa). Residues Ser-56, 80–82, and Gln-88 each bind FAD; that span reads RHR. DUMP-binding positions include 77 to 80, 88 to 92, and Arg-146; these read QLVR and QQSQR. A ThyX motif motif is present at residues 80–90; the sequence is RHRIASYTQQS. FAD is bound by residues 162–164 and His-168; that span reads NLR. Arg-173 serves as a coordination point for dUMP. Residue Arg-173 is the Involved in ionization of N3 of dUMP, leading to its activation of the active site.

This sequence belongs to the thymidylate synthase ThyX family. In terms of assembly, homotetramer. The cofactor is FAD.

The enzyme catalyses dUMP + (6R)-5,10-methylene-5,6,7,8-tetrahydrofolate + NADPH + H(+) = dTMP + (6S)-5,6,7,8-tetrahydrofolate + NADP(+). The protein operates within pyrimidine metabolism; dTTP biosynthesis. Its function is as follows. Catalyzes the reductive methylation of 2'-deoxyuridine-5'-monophosphate (dUMP) to 2'-deoxythymidine-5'-monophosphate (dTMP) while utilizing 5,10-methylenetetrahydrofolate (mTHF) as the methyl donor, and NADPH and FADH(2) as the reductant. This is Flavin-dependent thymidylate synthase from Pyrococcus horikoshii (strain ATCC 700860 / DSM 12428 / JCM 9974 / NBRC 100139 / OT-3).